Here is a 280-residue protein sequence, read N- to C-terminus: DNA repair protein RecO (280 aa).

The segment at 261-280 (DMAHGNHTGQEDLPATASGA) is disordered.

This sequence belongs to the RecO family.

Its function is as follows. Involved in DNA repair and RecF pathway recombination. The sequence is that of DNA repair protein RecO from Mycolicibacterium smegmatis (strain ATCC 700084 / mc(2)155) (Mycobacterium smegmatis).